A 78-amino-acid chain; its full sequence is Acyl carrier protein (78 aa).

The Carrier domain maps to 1-77; it reads MALIDEIKDV…DAAKYIEEHK (77 aa). Serine 37 is modified (O-(pantetheine 4'-phosphoryl)serine).

Belongs to the acyl carrier protein (ACP) family. Post-translationally, 4'-phosphopantetheine is transferred from CoA to a specific serine of apo-ACP by AcpS. This modification is essential for activity because fatty acids are bound in thioester linkage to the sulfhydryl of the prosthetic group.

The protein resides in the secreted. Its pathway is lipid metabolism; fatty acid biosynthesis. In terms of biological role, carrier of the growing fatty acid chain in fatty acid biosynthesis. Has hemolytic activity forming pores approximately 1 nm in diameter into erythrocytes. Is able to induce murine colonic lesions and to disrupt the integrity of epithelial cell monolayers. The polypeptide is Acyl carrier protein (acpP) (Brachyspira hyodysenteriae (Treponema hyodysenteriae)).